The primary structure comprises 318 residues: MNNRRKIVVIGASNVGSAVANKIADFQLATEVVLIDLNEDKAWGEAKDSSHATSCIYSTNIKFHLGDYEDCKDANIIVITAGPSIRPGETPDRLKLAGTNAKIMSSVMGEIVKRTKEAMIIMITNPLDVATYVVSTQFDYPRNLILGTGTMLETYRFRRILADKYQVDPKNINGYVLGEHGNAAFVAWSTTGCAGFPIDDLDEYFHRTEKLSHEAVEQELVQVAYDVINKKGFTNTGIAMAACRFIKSVLYDEHTILPCSAVLEGEYGIKDVALSIPRMVCADGIMRSFEVHLTDDELEKMHKAAQSVRSALDGAGIK.

Position 13–41 (13–41 (SNVGSAVANKIADFQLATEVVLIDLNEDK)) interacts with NAD(+). Substrate-binding residues include Arg93, Asn125, and Arg156. Asn125 provides a ligand contact to NAD(+). Residue His180 is the Proton acceptor of the active site. Tyr225 is modified (phosphotyrosine). Thr234 is a binding site for substrate.

The protein belongs to the LDH/MDH superfamily. LDH family. As to quaternary structure, homotetramer.

It is found in the cytoplasm. It catalyses the reaction (S)-lactate + NAD(+) = pyruvate + NADH + H(+). Its pathway is fermentation; pyruvate fermentation to lactate; (S)-lactate from pyruvate: step 1/1. The protein is L-lactate dehydrogenase (ldh) of Selenomonas ruminantium.